Here is a 305-residue protein sequence, read N- to C-terminus: Large ribosomal subunit protein uL2m (305 aa).

A mitochondrion-targeting transit peptide spans 1–60 (MALCALTRALRSLNLAPPTVAAPAPSLFPAAQMMNNGLLQQPSALMLLPCRPVLTSVALN). The tract at residues 264-283 (RWLGKRPNSGRWHRKGGWAG) is disordered. The segment covering 274–283 (RWHRKGGWAG) has biased composition (basic residues).

The protein belongs to the universal ribosomal protein uL2 family. In terms of assembly, component of the mitochondrial large ribosomal subunit (mt-LSU). Mature mammalian 55S mitochondrial ribosomes consist of a small (28S) and a large (39S) subunit. The 28S small subunit contains a 12S ribosomal RNA (12S mt-rRNA) and 30 different proteins. The 39S large subunit contains a 16S rRNA (16S mt-rRNA), a copy of mitochondrial valine transfer RNA (mt-tRNA(Val)), which plays an integral structural role, and 52 different proteins.

It is found in the mitochondrion. The polypeptide is Large ribosomal subunit protein uL2m (MRPL2) (Homo sapiens (Human)).